Reading from the N-terminus, the 242-residue chain is NAD-dependent protein deacetylase 1 (242 aa).

The Deacetylase sirtuin-type domain occupies 1–242 (MTITSWLAAS…LNEQLAEVDP (242 aa)). Ala19, Thr23, Phe30, Arg31, Gln97, Val99, Asp100, and His115 together coordinate NAD(+). Phe30 is a binding site for nicotinamide. Nicotinamide contacts are provided by Val99 and Asp100. His115 functions as the Proton acceptor in the catalytic mechanism. Positions 123, 126, 142, and 144 each coordinate Zn(2+). Positions 182, 183, 207, and 226 each coordinate NAD(+).

The protein belongs to the sirtuin family. Class U subfamily. Zn(2+) serves as cofactor.

The protein localises to the cytoplasm. The enzyme catalyses N(6)-acetyl-L-lysyl-[protein] + NAD(+) + H2O = 2''-O-acetyl-ADP-D-ribose + nicotinamide + L-lysyl-[protein]. NAD-dependent protein deacetylase which modulates the activities of several enzymes which are inactive in their acetylated form. The sequence is that of NAD-dependent protein deacetylase 1 from Geobacillus kaustophilus (strain HTA426).